A 227-amino-acid polypeptide reads, in one-letter code: Endo-1,4-beta-xylanase 2 (227 aa).

Residues Met1–Arg36 form the signal peptide. The N-linked (GlcNAc...) asparagine glycan is linked to Asn29. Residues Gln37–Gln225 form the GH11 domain. The active-site Nucleophile is Glu121. Glu212 acts as the Proton donor in catalysis.

The protein belongs to the glycosyl hydrolase 11 (cellulase G) family.

Its subcellular location is the secreted. The enzyme catalyses Endohydrolysis of (1-&gt;4)-beta-D-xylosidic linkages in xylans.. It functions in the pathway glycan degradation; xylan degradation. Endo-1,4-beta-xylanase involved in the hydrolysis of xylan, a major structural heterogeneous polysaccharide found in plant biomass representing the second most abundant polysaccharide in the biosphere, after cellulose. This Humicola insolens (Soft-rot fungus) protein is Endo-1,4-beta-xylanase 2 (xyn2).